The sequence spans 492 residues: Phosphoenolpyruvate carboxylase (492 aa).

The protein belongs to the PEPCase type 2 family. In terms of assembly, homotetramer. Mg(2+) serves as cofactor.

The enzyme catalyses oxaloacetate + phosphate = phosphoenolpyruvate + hydrogencarbonate. Its function is as follows. Catalyzes the irreversible beta-carboxylation of phosphoenolpyruvate (PEP) to form oxaloacetate (OAA), a four-carbon dicarboxylic acid source for the tricarboxylic acid cycle. The sequence is that of Phosphoenolpyruvate carboxylase from Halobacterium salinarum (strain ATCC 29341 / DSM 671 / R1).